We begin with the raw amino-acid sequence, 541 residues long: Phosphoenolpyruvate carboxykinase (ATP) (541 aa).

Residues R67, Y207, and K213 each contribute to the substrate site. ATP is bound by residues K213, H232, and 248–256; that span reads GLSGTGKTT. Positions 213 and 232 each coordinate Mn(2+). D269 provides a ligand contact to Mn(2+). ATP is bound by residues E297, R333, 449 to 450, and T455; that span reads RI. Substrate is bound at residue R333.

Belongs to the phosphoenolpyruvate carboxykinase (ATP) family. Monomer. Mn(2+) serves as cofactor.

It localises to the cytoplasm. The enzyme catalyses oxaloacetate + ATP = phosphoenolpyruvate + ADP + CO2. Its pathway is carbohydrate biosynthesis; gluconeogenesis. Its function is as follows. Involved in the gluconeogenesis. Catalyzes the conversion of oxaloacetate (OAA) to phosphoenolpyruvate (PEP) through direct phosphoryl transfer between the nucleoside triphosphate and OAA. This is Phosphoenolpyruvate carboxykinase (ATP) from Vibrio atlanticus (strain LGP32) (Vibrio splendidus (strain Mel32)).